The primary structure comprises 176 residues: Ribosome maturation factor RimM (176 aa).

One can recognise a PRC barrel domain in the interval 99 to 176; that stretch reads EDEYYWSDLV…RMVVDWERDF (78 aa).

The protein belongs to the RimM family. As to quaternary structure, binds ribosomal protein uS19.

It is found in the cytoplasm. Its function is as follows. An accessory protein needed during the final step in the assembly of 30S ribosomal subunit, possibly for assembly of the head region. Essential for efficient processing of 16S rRNA. May be needed both before and after RbfA during the maturation of 16S rRNA. It has affinity for free ribosomal 30S subunits but not for 70S ribosomes. The sequence is that of Ribosome maturation factor RimM from Psychrobacter sp. (strain PRwf-1).